Reading from the N-terminus, the 627-residue chain is MTTSAQILPLVKDPERLEARLSEIPPEPGVYFMRDGSDRIIYIGKSRKLRSRVRSYFREGYNKTERIATMAKLVTEIEFIVTDTEAEALALEANLIKQHQPYFNVLLKDDKKYPYVCITWSEDYPRIFITRKRQLGKEKDKYYGPYTDSGLLREILRISKRIFALRQRPQPLFKDRPCLNYDLGRCPGVCQQLISPEEYRKTVQKVAMVFQGRTQELIDILSEQMEKAAEALNFEVAARIRDQIAGLKSLTAEQKVSLPDDTVSRDAIALAGDAQHACIQLFQIRAGQLVGRLAFVAESHAEPGAILQRVLEEHYQTAESVEIPAEILVQHELPDAEILADVLTQLKGRKVTIFTPQRQVKAELIEMVERNAQYELQRMQKLGDRNHQATQDLAAILDLPNLPHRIEGYDISHIQGSNAVASQVVFIDGLPAKQNYRHYKIKNPTVTIGHSDDFASLAEVIQRRFRKYAEDPQLSRVGNPDWPDLIMIDGGKGQLSSVVTVLQEMNLLEDLRVISLAKRREEIFLPGESQPLKTDAEQPGVQLLRRLRDEAHRFAVSFHRQQRSDKLKRSRLDEIPGLGHHRQKQMLAHFRSVDYIRQATPSQIAEVPGIGPHLAQAIYDYFHPSHL.

In terms of domain architecture, GIY-YIG spans 26-105 (PEPGVYFMRD…IKQHQPYFNV (80 aa)). In terms of domain architecture, UVR spans 215-250 (QELIDILSEQMEKAAEALNFEVAARIRDQIAGLKSL).

Belongs to the UvrC family. In terms of assembly, interacts with UvrB in an incision complex.

Its subcellular location is the cytoplasm. The UvrABC repair system catalyzes the recognition and processing of DNA lesions. UvrC both incises the 5' and 3' sides of the lesion. The N-terminal half is responsible for the 3' incision and the C-terminal half is responsible for the 5' incision. This chain is UvrABC system protein C, found in Nostoc sp. (strain PCC 7120 / SAG 25.82 / UTEX 2576).